Consider the following 133-residue polypeptide: Large ribosomal subunit protein uL22 (133 aa).

This sequence belongs to the universal ribosomal protein uL22 family. In terms of assembly, part of the 50S ribosomal subunit.

This protein binds specifically to 23S rRNA; its binding is stimulated by other ribosomal proteins, e.g. L4, L17, and L20. It is important during the early stages of 50S assembly. It makes multiple contacts with different domains of the 23S rRNA in the assembled 50S subunit and ribosome. In terms of biological role, the globular domain of the protein is located near the polypeptide exit tunnel on the outside of the subunit, while an extended beta-hairpin is found that lines the wall of the exit tunnel in the center of the 70S ribosome. This is Large ribosomal subunit protein uL22 from Aquifex pyrophilus.